A 735-amino-acid chain; its full sequence is MIP-related peptides (735 aa).

The N-terminal stretch at 1–20 is a signal peptide; the sequence is MCTRPGLAALLVLMTSCASS. Residues 21–135 constitute a propeptide that is removed on maturation; sequence FSRADTQSAS…EDSDTKVDTR (115 aa). A compositionally biased stretch (low complexity) spans 33 to 65; sequence ALSAASADAQAARQQQEQHLVAQQQQQQQQQQQ. Disordered stretches follow at residues 33–212 and 229–251; these read ALSA…FGKK and FGKKSSGESAGDSGYISVASRGS. Polar residues-rich tracts occupy residues 66-76 and 101-125; these read HSNNNEPQQRA and PVSQPDLSPDFSNPMGSSLSQSGTP. Phenylalanine amide occurs at positions 142, 153, and 164. Positions 142 to 159 are enriched in basic residues; the sequence is FGKKRGQAPRFFGKKRAM. Positions 168–184 are excised as a propeptide; sequence SSEFPTSNSEQLALDTR. A Phenylalanine amide modification is found at Phe190. The propeptide occupies 194–203; the sequence is SFPESNREQR. The segment covering 194–204 has biased composition (basic and acidic residues); that stretch reads SFPESNREQRG. 2 positions are modified to phenylalanine amide: Phe209 and Phe229. Residues 214–229 constitute a propeptide, linker peptide; that stretch reads FDENVDIDERAAPRFF. A propeptide spanning residues 233–249 is cleaved from the precursor; it reads SSGESAGDSGYISVASR. Phe255 bears the Phenylalanine amide mark. A propeptide spans 259 to 267 (linker peptide); the sequence is QDDDIMIAA. Phe274 bears the Phenylalanine amide mark. Positions 279–287 are cleaved as a propeptide — linker peptide; the sequence is SDDNVALDL. A Phenylalanine amide modification is found at Phe294. A propeptide spanning residues 298–311 is cleaved from the precursor; that stretch reads QSSDLDDEISVALR. Phe317 carries the post-translational modification Phenylalanine amide. Positions 321–332 are excised as a propeptide; it reads RADDEDILLGER. At Phe338 the chain carries Phenylalanine amide. Residues 342–353 constitute a propeptide that is removed on maturation; the sequence is RANDENISFSLR. Disordered regions lie at residues 352 to 373 and 381 to 400; these read LRGSPRFFGKKRSDESDDDNIG and RFFGKKRSDETDDENIGLMA. Phenylalanine amide is present on Phe359. A propeptide spanning residues 363–377 is cleaved from the precursor; sequence RSDESDDDNIGLVAR. Phe383 bears the Phenylalanine amide mark. The propeptide occupies 387-401; that stretch reads RSDETDDENIGLMAR. Position 407 is a phenylalanine amide (Phe407). The propeptide at 412 to 426 is linker peptide; the sequence is SDGLDDGGNIIDVAT. Positions 430–464 are disordered; it reads PRFFGKKRSNSDSSDKSSDSALSSSESGRQTRQAP. Phe433 is modified (phenylalanine amide). The propeptide occupies 437–461; the sequence is RSNSDSSDKSSDSALSSSESGRQTR. Basic and acidic residues predominate over residues 438–447; sequence SNSDSSDKSS. Gln462 is modified (pyrrolidone carboxylic acid). Phe467 carries the phenylalanine amide modification. Residues 471 to 493 constitute a propeptide that is removed on maturation; that stretch reads YVDEHHVSKRAAATAFPLIIEAR. The residue at position 494 (Gln494) is a Pyrrolidone carboxylic acid. Residue Phe499 is modified to Phenylalanine amide. Residues 503–509 constitute a propeptide that is removed on maturation; it reads EYRYPPR. Ile515 is subject to Isoleucine amide. The propeptide occupies 519-546; sequence FSLYRSPGKYSLSSPYMSAKEFKETFRR. Methionine amide is present on Met552. Positions 556-585 are excised as a propeptide; sequence TAELNEEGSDDFTNDDTDDENEYDETVLFK. Val592 is subject to Valine amide. Leu601 carries the leucine amide modification. Ile610 is modified (isoleucine amide). Val619 is subject to Valine amide. Ile628 carries the isoleucine amide modification. Positions 632–661 are cleaved as a propeptide — linker peptide; that stretch reads DLDWYQKALCAEADILELDDCADFLGNDDV. Gln664 carries the pyrrolidone carboxylic acid modification. The residue at position 669 (Ile669) is an Isoleucine amide. Residues 674-705 constitute a propeptide, linker peptide; sequence GEDVSERDYAQLLEALSRLQAIKQIKARIQNE. A Valine amide modification is found at Val714. Residues 715–735 constitute a propeptide that is removed on maturation; sequence GRRSEYNLGPFDEFVDESMER.

In terms of tissue distribution, expressed in the CNS and peripheral tissues (the digestive tract, vasculature, and the reproductive organs).

The protein resides in the secreted. Its function is as follows. Has some structural and functional features similar to vertebrate opioid peptides. AMRPs are inhibitory on Aplysia esophagus, penis retractor muscle, and body wall muscle. In Aplysia californica (California sea hare), this protein is MIP-related peptides (MRP).